The following is a 765-amino-acid chain: Probable dipeptidyl peptidase 4 (765 aa).

The signal sequence occupies residues 1–14 (MKWSILLLVGCAAA). Asparagine 35, asparagine 78, asparagine 101, asparagine 110, asparagine 169, asparagine 218, asparagine 465, and asparagine 490 each carry an N-linked (GlcNAc...) asparagine glycan. The Charge relay system role is filled by serine 613. Asparagine 665 is a glycosylation site (N-linked (GlcNAc...) asparagine). Catalysis depends on charge relay system residues aspartate 690 and histidine 725.

Belongs to the peptidase S9B family.

The protein resides in the secreted. The catalysed reaction is Release of an N-terminal dipeptide, Xaa-Yaa-|-Zaa-, from a polypeptide, preferentially when Yaa is Pro, provided Zaa is neither Pro nor hydroxyproline.. Extracellular dipeptidyl-peptidase which removes N-terminal dipeptides sequentially from polypeptides having unsubstituted N-termini provided that the penultimate residue is proline. Contributes to pathogenicity. The chain is Probable dipeptidyl peptidase 4 (dpp4) from Aspergillus fumigatus (strain ATCC MYA-4609 / CBS 101355 / FGSC A1100 / Af293) (Neosartorya fumigata).